We begin with the raw amino-acid sequence, 268 residues long: NAD kinase (268 aa).

The Proton acceptor role is filled by aspartate 45. NAD(+)-binding positions include 45–46 (DG), 122–123 (NE), arginine 148, aspartate 150, 161–166 (TAYGKS), alanine 185, and glutamine 223.

Belongs to the NAD kinase family. The cofactor is a divalent metal cation.

Its subcellular location is the cytoplasm. The enzyme catalyses NAD(+) + ATP = ADP + NADP(+) + H(+). In terms of biological role, involved in the regulation of the intracellular balance of NAD and NADP, and is a key enzyme in the biosynthesis of NADP. Catalyzes specifically the phosphorylation on 2'-hydroxyl of the adenosine moiety of NAD to yield NADP. The sequence is that of NAD kinase from Latilactobacillus sakei subsp. sakei (strain 23K) (Lactobacillus sakei subsp. sakei).